Reading from the N-terminus, the 256-residue chain is Homeobox protein ceh-34 (256 aa).

Positions 134–193 (GEETNYCFKSKSRNVLRDAYKKCQYPSVEDKRRLAQQTELSIIQVSNWFKNKRQRERAAG) form a DNA-binding region, homeobox. The disordered stretch occupies residues 187 to 233 (QRERAAGQLDRSSARSNDSDDGSSGCESKPPMNIDSPAPPPLPTSFD).

Belongs to the SIX/Sine oculis homeobox family. As to quaternary structure, interacts (via N-terminus) with eya-1 (via C-terminus). Shows expression only in the pharyngeal nervous system.

It is found in the nucleus. Acts as a transcription regulator. Binds to the sequence motif 5'-TCAGGTT-3'. Binds to the cis-regulatory element of proapoptotic factor egl-1 gene and together with eya-1 activates egl-1 expression to promote motor neuron M4 sister cell apoptosis. Also promotes apoptosis of I1 pharyngeal neuron sister cell. Together with eya-1, required to specify the coelomocyte fate in embryonic and postembryonic precursors. Required to establish and maintain the differentiation of all 14 classes of pharyngeal neurons. Controls the neurotransmitter signaling capacity of the neurons and is required for the expression of some neurotransmitter receptors including mgl-1, glr-2 and ser-7. Affects the neuropeptidergic identity of pharyngeal neurons. Required for the pharyngeal expression of sensory receptors gur-3, glu-7 and str-97, antimicrobial defense genes such as spp-12, gpla-1/flr-2 and htrl-1, and pan-pharyngeal nervous system genes such as kin-36. Required to establish and maintain pharyngeal nervous system architecture by ensuring correct axon and synapse organization. Required for expression of eya-1 which may act as a transcriptional cofactor to specify distinct pharyngeal neuron types. Cooperates with several homeobox proteins to specify distinct pharyngeal neuron types including unc-86 in the NSM and I1 neurons, ceh-14 in the I2 neuron, ceh-2 and pros-1 in the I3 neuron, ceh-45 in the M1 neuron, ceh-2 in the M3 neuron, ceh-28 and zag-1 in the M4 neuron, and vab-15 in the M5 neuron. This is Homeobox protein ceh-34 (ceh-34) from Caenorhabditis elegans.